The following is a 390-amino-acid chain: uncharacterized protein (390 aa).

The protein belongs to the glycosyltransferase group 1 family. Glycosyltransferase 4 subfamily.

This is an uncharacterized protein from Methanocaldococcus jannaschii (strain ATCC 43067 / DSM 2661 / JAL-1 / JCM 10045 / NBRC 100440) (Methanococcus jannaschii).